The sequence spans 684 residues: Nuclear transcription factor Y subunit gamma (684 aa).

4 disordered regions span residues 1-74 (MENQ…NIST), 112-238 (MNSP…SSFQ), 414-487 (HSPQ…TQQL), and 511-650 (QQQQ…KNDE). Over residues 21 to 49 (SNSHNNHHNNNNNNNYNNNNNNNINNINN) the composition is skewed to low complexity. Over residues 58–74 (KSIQQHSPHSSTPNIST) the composition is skewed to polar residues. Low complexity predominate over residues 142–162 (HQHPSSASSSSSSSSSSLSSS). A compositionally biased stretch (basic residues) spans 163 to 176 (SHHHHSNHHHHHPN). Residues 188-203 (PSLNDSSSNGNGTPAL) are compositionally biased toward polar residues. Residues 220–238 (TPTSTPNQRFQSNGSSSFQ) are compositionally biased toward low complexity. Residues 414–423 (HSPQLQEQSS) are compositionally biased toward polar residues. Positions 424-437 (NNNNNNNNNNNNNN) are enriched in low complexity. Polar residues-rich tracts occupy residues 438–456 (SVSV…SPLS) and 464–477 (SQDY…NNHN). 3 stretches are compositionally biased toward low complexity: residues 478–487 (QSSLSQTQQL), 511–522 (QQQQHSQQISQQ), and 529–637 (PSNS…NNNN).

This sequence belongs to the NFYC/HAP5 subunit family. Heterotrimeric transcription factor composed of three components, NF-YA, NF-YB and NF-YC. NF-YB and NF-YC must interact and dimerize for NF-YA association and DNA binding.

The protein localises to the nucleus. Its function is as follows. Stimulates the transcription of various genes by recognizing and binding to a CCAAT motif in promoters. The protein is Nuclear transcription factor Y subunit gamma (nfyc-1) of Dictyostelium discoideum (Social amoeba).